A 160-amino-acid chain; its full sequence is Cytochrome b6-f complex subunit 4 (160 aa).

3 helical membrane-spanning segments follow: residues 36–56 (LLYI…GLSV), 95–115 (LLGV…PFIE), and 127–147 (PVAM…GIGA).

It belongs to the cytochrome b family. PetD subfamily. In terms of assembly, the 4 large subunits of the cytochrome b6-f complex are cytochrome b6, subunit IV (17 kDa polypeptide, petD), cytochrome f and the Rieske protein, while the 4 small subunits are petG, petL, petM and petN. The complex functions as a dimer.

Its subcellular location is the plastid. It is found in the chloroplast thylakoid membrane. Its function is as follows. Component of the cytochrome b6-f complex, which mediates electron transfer between photosystem II (PSII) and photosystem I (PSI), cyclic electron flow around PSI, and state transitions. The polypeptide is Cytochrome b6-f complex subunit 4 (Guillardia theta (Cryptophyte)).